The following is a 2297-amino-acid chain: Serine/threonine-protein kinase WNK2 (2297 aa).

A compositionally biased stretch (basic and acidic residues) spans 1–10 (MDGDGGRRDV). 2 disordered regions span residues 1–75 (MDGD…QRRV) and 89–183 (ARGR…EDDL). R19 and R30 each carry omega-N-methylarginine. The residue at position 45 (S45) is a Phosphoserine. Over residues 92–120 (RPAAPAPAALVAQPGAPGAPADAGPEPVG) the composition is skewed to low complexity. Over residues 142-172 (GPREEAAATVRKEDEGAAEAKPEPGRTRRDE) the composition is skewed to basic and acidic residues. Over residues 173–182 (PEEEEDDEDD) the composition is skewed to acidic residues. Positions 195–453 (LKFDIELGRG…IKDLLSHAFF (259 aa)) constitute a Protein kinase domain. ATP-binding positions include S205, 275-278 (TELM), and K325. The Proton acceptor role is filled by D342. Residues S352 and S356 each carry the phosphoserine; by autocatalysis modification. S560 carries the phosphoserine modification. 8 disordered regions span residues 579-630 (AQAG…DSQS), 699-751 (FPDP…PVVP), 917-1022 (PQMA…PGSQ), 1117-1185 (PVQE…ERAS), 1262-1297 (SEDT…SQAN), 1323-1345 (APEA…ASQG), 1374-1480 (SAQS…HEAP), and 1492-1586 (PCTP…DSTI). Residues 604-625 (PTSATSLASDSTFDSGQGSTVY) are compositionally biased toward polar residues. Pro residues-rich tracts occupy residues 709–740 (VLPP…PTPL) and 939–1007 (PPQP…PLQP). At S1150 the chain carries Phosphoserine. A compositionally biased stretch (basic residues) spans 1167–1178 (ARKHHRRSTRAR). S1262 carries the post-translational modification Phosphoserine. A compositionally biased stretch (polar residues) spans 1392-1406 (SKEQPSFLASQQLLS). A compositionally biased stretch (pro residues) spans 1411 to 1426 (SNPPGAPPAPLAPSSP). Polar residues-rich tracts occupy residues 1439–1453 (ATST…TASQ) and 1461–1473 (QGLT…SQPL). A compositionally biased stretch (pro residues) spans 1510–1520 (EPLPPPAPEPS). Over residues 1526-1544 (PQPALGQPAPLLPAAVGAV) the composition is skewed to low complexity. The segment covering 1552-1565 (PSPPLGPTVPPQPP) has biased composition (pro residues). At S1588 the chain carries Phosphoserine. Basic and acidic residues predominate over residues 1621–1631 (TLEPLRGDQPR). Residues 1621 to 1865 (TLEPLRGDQP…PVQKQASLPV (245 aa)) are disordered. The segment covering 1675–1688 (QGTSSSMTAESSPR) has biased composition (polar residues). At S1685 the chain carries Phosphoserine. A compositionally biased stretch (basic and acidic residues) spans 1721–1731 (ARVEPTDRDGG). Residues S1736, S1817, S1818, S1862, and S1889 each carry the phosphoserine modification. Disordered stretches follow at residues 1970 to 1990 (NVGF…SKSK) and 2011 to 2031 (TGHL…QASV). Positions 1981–1990 (GRRRKTSKSK) are enriched in basic residues. S2067 bears the Phosphoserine mark. Disordered stretches follow at residues 2123-2142 (SRSS…QPAL) and 2269-2297 (CCGH…PVRS). Residues 2272-2289 (HSTQPRGGQRVGSKTASF) show a composition bias toward polar residues.

It belongs to the protein kinase superfamily. Ser/Thr protein kinase family. WNK subfamily. In terms of assembly, forms a complex with the phosphorylated form of STK39. The cofactor is Mg(2+). Autophosphorylated. Autophosphorylation at Ser-352 and Ser-356 promotes its activity. In terms of tissue distribution, expressed in various cancer cell lines (at protein level). Predominantly expressed in heart, brain, skeletal muscle and colon.

The protein localises to the cytoplasm. It localises to the cell membrane. It carries out the reaction L-seryl-[protein] + ATP = O-phospho-L-seryl-[protein] + ADP + H(+). The catalysed reaction is L-threonyl-[protein] + ATP = O-phospho-L-threonyl-[protein] + ADP + H(+). Activation requires autophosphorylation of Ser-356 and, to a lower extent, Ser-352. Serine/threonine-protein kinase component of the WNK2-SPAK/OSR1 kinase cascade, which plays an important role in the regulation of electrolyte homeostasis, cell signaling, survival, and proliferation. The WNK2-SPAK/OSR1 kinase cascade is composed of WNK2, which mediates phosphorylation and activation of downstream kinases OXSR1/OSR1 and STK39/SPAK. Following activation, OXSR1/OSR1 and STK39/SPAK catalyze phosphorylation of ion cotransporters, regulating their activity. Acts as an activator and inhibitor of sodium-coupled chloride cotransporters and potassium-coupled chloride cotransporters respectively. Activates SLC12A2, SCNN1A, SCNN1B, SCNN1D and SGK1 and inhibits SLC12A5. Negatively regulates the EGF-induced activation of the ERK/MAPK-pathway and the downstream cell cycle progression. Affects MAPK3/MAPK1 activity by modulating the activity of MAP2K1 and this modulation depends on phosphorylation of MAP2K1 by PAK1. WNK2 acts by interfering with the activity of PAK1 by controlling the balance of the activity of upstream regulators of PAK1 activity, RHOA and RAC1, which display reciprocal activity. The protein is Serine/threonine-protein kinase WNK2 of Homo sapiens (Human).